The primary structure comprises 340 residues: Flap endonuclease 1 (340 aa).

The tract at residues 1–98 is N-domain; it reads MGLNLKDLVV…AEIERRKQIK (98 aa). The Mg(2+) site is built by Asp-27, Asp-80, Glu-152, Glu-154, Asp-173, Asp-175, and Asp-236. Positions 116-258 are I-domain; sequence DARKYAQQTT…TALKMIKQHS (143 aa).

Belongs to the XPG/RAD2 endonuclease family. FEN1 subfamily. As to quaternary structure, interacts with PCNA. PCNA stimulates the nuclease activity without altering cleavage specificity. Mg(2+) is required as a cofactor.

Structure-specific nuclease with 5'-flap endonuclease and 5'-3' exonuclease activities involved in DNA replication and repair. During DNA replication, cleaves the 5'-overhanging flap structure that is generated by displacement synthesis when DNA polymerase encounters the 5'-end of a downstream Okazaki fragment. Binds the unpaired 3'-DNA end and kinks the DNA to facilitate 5' cleavage specificity. Cleaves one nucleotide into the double-stranded DNA from the junction in flap DNA, leaving a nick for ligation. Also involved in the base excision repair (BER) pathway. Acts as a genome stabilization factor that prevents flaps from equilibrating into structures that lead to duplications and deletions. Also possesses 5'-3' exonuclease activity on nicked or gapped double-stranded DNA. The chain is Flap endonuclease 1 from Nitrosopumilus maritimus (strain SCM1).